The primary structure comprises 143 residues: Ribosome-binding factor A (143 aa).

The tract at residues 117–143 (DAEIARRSQGAMPAGEADPYRHSDEEE) is disordered. The span at 134 to 143 (DPYRHSDEEE) shows a compositional bias: basic and acidic residues.

It belongs to the RbfA family. In terms of assembly, monomer. Binds 30S ribosomal subunits, but not 50S ribosomal subunits or 70S ribosomes.

Its subcellular location is the cytoplasm. One of several proteins that assist in the late maturation steps of the functional core of the 30S ribosomal subunit. Associates with free 30S ribosomal subunits (but not with 30S subunits that are part of 70S ribosomes or polysomes). Required for efficient processing of 16S rRNA. May interact with the 5'-terminal helix region of 16S rRNA. This chain is Ribosome-binding factor A, found in Cutibacterium acnes (strain DSM 16379 / KPA171202) (Propionibacterium acnes).